The primary structure comprises 419 residues: Menaquinone reductase, integral membrane subunit (419 aa).

The next 10 membrane-spanning stretches (helical) occupy residues 23-43 (LSKF…GLYA), 61-81 (FGFG…AGAF), 98-118 (IINL…LVLV), 143-163 (VIFC…PLIL), 176-196 (AVAH…AFLS), 221-241 (FFIW…SGPV), 270-290 (IAGT…YAWA), 316-336 (LWAE…VPAL), 341-361 (VLFY…RYVM), and 383-403 (WAEW…LSLS).

It belongs to the NrfD family. The Qrc complex is composed of four subunits: QrcA, QrcB, QrcC and QrcD. Can form a supercomplex with the [NiFe] hydrogenase HynA1 and the tetraheme Type I cytochrome c3 TpIc(3), its physiological electron donors.

The protein localises to the cell inner membrane. In terms of biological role, component of the respiratory Qrc complex, that catalyzes the reduction of the menaquinone pool using electrons transferred from the reduced periplasmic cytochrome c3, and which is probably involved in sulfate respiration. Is likely essential for growth on H(2) or formate since the periplasmic hydrogenases and/or formate dehydrogenases act as primary electron donors for the Qrc complex. The QrcD subunit anchors the protein complex to the membrane and likely interacts with the quinone pool. This chain is Menaquinone reductase, integral membrane subunit, found in Nitratidesulfovibrio vulgaris (strain ATCC 29579 / DSM 644 / CCUG 34227 / NCIMB 8303 / VKM B-1760 / Hildenborough) (Desulfovibrio vulgaris).